The sequence spans 380 residues: Cytochrome b (380 aa).

A run of 4 helical transmembrane segments spans residues 34-54 (SGSLLGLCLVVQILTGIFLAM), 78-99 (WFLRYVHANGVSLFFICMYCHI), 114-134 (WNVGVILFLVTILTAFMGYVL), and 179-199 (FFPFHFLFPFIIAALAVIHLV). Heme b-binding residues include histidine 84 and histidine 98. Heme b contacts are provided by histidine 183 and histidine 197. Histidine 202 contributes to the a ubiquinone binding site. A run of 4 helical transmembrane segments spans residues 227-247 (TKDTVGFILLVAALFSLALLF), 289-309 (LGGVIALVAAILVLFLMPLLN), 321-341 (LSQAAFWLLVAHLFILTWIGS), and 348-369 (YVLLGQVASVLYFSLFIFGFPI).

The protein belongs to the cytochrome b family. As to quaternary structure, the main subunits of complex b-c1 are: cytochrome b, cytochrome c1 and the Rieske protein. Requires heme b as cofactor.

Its subcellular location is the mitochondrion inner membrane. Functionally, component of the ubiquinol-cytochrome c reductase complex (complex III or cytochrome b-c1 complex) that is part of the mitochondrial respiratory chain. The b-c1 complex mediates electron transfer from ubiquinol to cytochrome c. Contributes to the generation of a proton gradient across the mitochondrial membrane that is then used for ATP synthesis. The chain is Cytochrome b (MT-CYB) from Strongylocentrotus purpuratus (Purple sea urchin).